Reading from the N-terminus, the 599-residue chain is Elongation factor 4 (599 aa).

Residues 2-184 enclose the tr-type G domain; sequence KNIRNFSIIA…RLVRDIPPPE (183 aa). GTP contacts are provided by residues 14–19 and 131–134; these read DHGKST and NKID.

The protein belongs to the TRAFAC class translation factor GTPase superfamily. Classic translation factor GTPase family. LepA subfamily.

The protein localises to the cell inner membrane. It catalyses the reaction GTP + H2O = GDP + phosphate + H(+). Required for accurate and efficient protein synthesis under certain stress conditions. May act as a fidelity factor of the translation reaction, by catalyzing a one-codon backward translocation of tRNAs on improperly translocated ribosomes. Back-translocation proceeds from a post-translocation (POST) complex to a pre-translocation (PRE) complex, thus giving elongation factor G a second chance to translocate the tRNAs correctly. Binds to ribosomes in a GTP-dependent manner. This is Elongation factor 4 from Citrobacter koseri (strain ATCC BAA-895 / CDC 4225-83 / SGSC4696).